The sequence spans 1255 residues: Kinesin-related protein 7 (1255 aa).

The tract at residues methionine 1–serine 26 is disordered. The region spanning asparagine 28–isoleucine 349 is the Kinesin motor domain. Glycine 107–threonine 114 provides a ligand contact to ATP. Low complexity-rich tracts occupy residues asparagine 454 to asparagine 491, asparagine 545 to glycine 563, and histidine 583 to serine 603. Disordered stretches follow at residues asparagine 454–phenylalanine 503, glycine 530–tyrosine 564, aspartate 579–asparagine 628, glutamate 661–threonine 686, glutamate 795–isoleucine 864, and isoleucine 915–lysine 934. The segment covering valine 608–asparagine 628 has biased composition (polar residues). Positions glycine 813–glutamate 834 are enriched in acidic residues. Positions isoleucine 915–serine 932 are enriched in low complexity. The helical transmembrane segment at isoleucine 945–leucine 965 threads the bilayer. Positions asparagine 1088–leucine 1223 form a coiled coil.

This sequence belongs to the TRAFAC class myosin-kinesin ATPase superfamily. Kinesin family.

It localises to the nucleus membrane. Its subcellular location is the cytoplasm. It is found in the cytoskeleton. Functionally, microtubule-associated force-producing protein that plays a role in organelle transport. Its motor activity is directed toward the microtubule's plus end. May be involved in cell motility or cell differentiation during prestalk formation. The chain is Kinesin-related protein 7 (kif7) from Dictyostelium discoideum (Social amoeba).